The sequence spans 416 residues: Calreticulin (416 aa).

Asparagine 54 carries an N-linked (GlcNAc...) asparagine glycan. Cysteine 108 and cysteine 140 are disulfide-bonded. An alpha-D-glucoside is bound by residues tyrosine 112, lysine 114, tyrosine 131, and aspartate 138. A run of 7 repeats spans residues 194-205 (KQSGSVYTDWDI), 213-224 (DPEAKKPEDWED), 230-241 (DPEDKKPEGYDD), 248-259 (DPEAKKPEDWDD), 263-273 (GEWTAPTIPNP), 277-287 (GEWKPKKIKNP), and 291-301 (GKWKAPMIDNP). The interval 194–259 (KQSGSVYTDW…EAKKPEDWDD (66 aa)) is 4 X approximate repeats. Positions 209 to 281 (KQIKDPEAKK…NPDYKGEWKP (73 aa)) are disordered. Residues 210 to 255 (QIKDPEAKKPEDWEDKEYIPDPEDKKPEGYDDIPKEITDPEAKKPE) show a composition bias toward basic and acidic residues. The segment at 263-301 (GEWTAPTIPNPDYKGEWKPKKIKNPNFKGKWKAPMIDNP) is 3 X approximate repeats. Residue glutamate 321 coordinates an alpha-D-glucoside. Residues 349–378 (ETWGKNKDAEKAAFDEAEKKKEEEEAKDDP) are compositionally biased toward basic and acidic residues. Residues 349–416 (ETWGKNKDAE…EDDEDVHDEL (68 aa)) form a disordered region. The segment covering 379–416 (TESDDEKPDEEGESDGEGDDESKDIDNEEDDEDVHDEL) has biased composition (acidic residues). The Prevents secretion from ER motif lies at 413 to 416 (HDEL).

This sequence belongs to the calreticulin family.

The protein localises to the endoplasmic reticulum lumen. In terms of biological role, molecular calcium-binding chaperone promoting folding, oligomeric assembly and quality control in the ER via the calreticulin/calnexin cycle. This lectin may interact transiently with almost all of the monoglucosylated glycoproteins that are synthesized in the ER. This is Calreticulin from Berberis stolonifera (Barberry).